Consider the following 155-residue polypeptide: Cytochrome c-type biogenesis protein CcmE (155 aa).

Topologically, residues 1–8 (MNPLRKKR) are cytoplasmic. Residues 9 to 29 (LLIIVALLAGVGLAVTLALSA) traverse the membrane as a helical; Signal-anchor for type II membrane protein segment. Residues 30-155 (LQENINLFYT…AASPTPVKQG (126 aa)) lie on the Periplasmic side of the membrane. The heme site is built by H124 and Y128.

The protein belongs to the CcmE/CycJ family.

The protein resides in the cell inner membrane. In terms of biological role, heme chaperone required for the biogenesis of c-type cytochromes. Transiently binds heme delivered by CcmC and transfers the heme to apo-cytochromes in a process facilitated by CcmF and CcmH. The polypeptide is Cytochrome c-type biogenesis protein CcmE (Pseudomonas syringae pv. syringae (strain B728a)).